A 63-amino-acid chain; its full sequence is Protease 2 small chain (63 aa).

A Peptidase S8 domain is found at 11 to 63 (QWGLSGTYGIRANTAWDNGYQGQGKIIAVVDTGITDHPDLLANRTSPLGYDFI).

The protein belongs to the peptidase S8 family. In terms of assembly, heterodimer of a large and a small chain.

The protein resides in the secreted. This is Protease 2 small chain from Achromobacter lyticus.